Here is a 584-residue protein sequence, read N- to C-terminus: High-affinity choline transporter 1 (584 aa).

Residues 1-6 lie on the Extracellular side of the membrane; sequence MTVHID. The chain crosses the membrane as a helical span at residues 7 to 27; the sequence is GIVAIVLFYLLILFVGLWAAW. Over 28–50 the chain is Cytoplasmic; that stretch reads KSKNTSMEGAMDRSEAIMIGGRD. Residues 51–71 traverse the membrane as a helical segment; the sequence is IGLLVGGFTMTATWVGGGYIN. At 72 to 83 the chain is on the extracellular side; sequence GTAEAVYVPGYG. The helical transmembrane segment at 84–104 threads the bilayer; sequence LAWAQAPFGYALSLVIGGLFF. Residues 105 to 127 are Cytoplasmic-facing; that stretch reads AKPMRSRGYVTMLDPFQQMYGKR. The chain crosses the membrane as a helical span at residues 128–148; that stretch reads MGGLLFIPALLGEIFWSAAIL. The Extracellular portion of the chain corresponds to 149–166; that stretch reads SALGATLSVIVDININVS. A helical transmembrane segment spans residues 167-187; it reads VVVSAVIAVLYTLVGGLYSVA. At 188–193 the chain is on the cytoplasmic side; it reads YTDVVQ. A helical transmembrane segment spans residues 194–214; the sequence is LFCIFLGLWISIPFALLNPAV. Over 215-239 the chain is Extracellular; sequence TDIIVTANQEVYQEPWVGNIQSKDS. Residues 240–260 form a helical membrane-spanning segment; that stretch reads LIWIDNFLLLMLGGIPWQVYF. Topologically, residues 261–276 are cytoplasmic; the sequence is QRVLSASSATYAQVLS. The helical transmembrane segment at 277–297 threads the bilayer; that stretch reads FLAAFGCVLMAIPSVLIGAIG. Over 298-319 the chain is Extracellular; it reads TSTDWNQTSYGLPGPIGKNETD. N-linked (GlcNAc...) asparagine glycosylation is present at Asn-303. A helical transmembrane segment spans residues 320-340; sequence MILPIVLQHLCPPYISFFGLG. Over 341–378 the chain is Cytoplasmic; that stretch reads AVSAAVMSSADSSILSASSMFARNIYHLAFRQEASDKE. The chain crosses the membrane as a helical span at residues 379–399; sequence IVWVMRITIFLFGGAATSMAL. At 400–408 the chain is on the extracellular side; the sequence is LAQSIYGLW. A helical transmembrane segment spans residues 409–429; that stretch reads YLSSDLVYVIIFPQLISVLFV. Residues 430–437 lie on the Cytoplasmic side of the membrane; it reads KGTNTYGS. The helical transmembrane segment at 438 to 458 threads the bilayer; it reads IAGYIIGFLLRISGGEPYLHM. At 459 to 487 the chain is on the extracellular side; the sequence is QPFIYYPGCYLDHSFGDDPVYVQRFPFKT. Residues 488–508 traverse the membrane as a helical segment; that stretch reads MAMLFSFLGNTGVSYLVKYLF. Residues 509 to 584 lie on the Cytoplasmic side of the membrane; it reads VSGILPPKLD…NPELSKSGND (76 aa).

The protein belongs to the sodium:solute symporter (SSF) (TC 2.A.21) family. Phosphorylated. Specific for cholinergic neurons.

It is found in the membrane. Imports choline from the extracellular space to the neuron with high affinity. Rate-limiting step in acetylcholine synthesis. Sodium ion and chloride ion dependent. The chain is High-affinity choline transporter 1 (CHT1) from Torpedo marmorata (Marbled electric ray).